Here is a 219-residue protein sequence, read N- to C-terminus: Phosphatidylserine decarboxylase proenzyme (219 aa).

The active-site Schiff-base intermediate with substrate; via pyruvic acid is Ser-188. Ser-188 is subject to Pyruvic acid (Ser); by autocatalysis.

Belongs to the phosphatidylserine decarboxylase family. PSD-A subfamily. In terms of assembly, heterodimer of a large membrane-associated beta subunit and a small pyruvoyl-containing alpha subunit. Pyruvate is required as a cofactor. Post-translationally, is synthesized initially as an inactive proenzyme. Formation of the active enzyme involves a self-maturation process in which the active site pyruvoyl group is generated from an internal serine residue via an autocatalytic post-translational modification. Two non-identical subunits are generated from the proenzyme in this reaction, and the pyruvate is formed at the N-terminus of the alpha chain, which is derived from the carboxyl end of the proenzyme. The post-translation cleavage follows an unusual pathway, termed non-hydrolytic serinolysis, in which the side chain hydroxyl group of the serine supplies its oxygen atom to form the C-terminus of the beta chain, while the remainder of the serine residue undergoes an oxidative deamination to produce ammonia and the pyruvoyl prosthetic group on the alpha chain.

Its subcellular location is the cell membrane. The enzyme catalyses a 1,2-diacyl-sn-glycero-3-phospho-L-serine + H(+) = a 1,2-diacyl-sn-glycero-3-phosphoethanolamine + CO2. It functions in the pathway phospholipid metabolism; phosphatidylethanolamine biosynthesis; phosphatidylethanolamine from CDP-diacylglycerol: step 2/2. Its function is as follows. Catalyzes the formation of phosphatidylethanolamine (PtdEtn) from phosphatidylserine (PtdSer). The chain is Phosphatidylserine decarboxylase proenzyme from Trichlorobacter lovleyi (strain ATCC BAA-1151 / DSM 17278 / SZ) (Geobacter lovleyi).